A 346-amino-acid chain; its full sequence is Holliday junction branch migration complex subunit RuvB (346 aa).

Positions 1–11 (MTEQRTIASSA) are enriched in polar residues. Positions 1-20 (MTEQRTIASSATREDEAADA) are disordered. The tract at residues 1-183 (MTEQRTIASS…FGIVQRLEFY (183 aa)) is large ATPase domain (RuvB-L). Residues Ile22, Arg23, Gly64, Lys67, Thr68, Thr69, 130 to 132 (EDF), Arg173, Tyr183, and Arg220 each bind ATP. Thr68 contacts Mg(2+). The tract at residues 184–254 (SPQELTRIVI…VAQAAMQMLK (71 aa)) is small ATPAse domain (RuvB-S). Positions 257–346 (PEGFDELDRR…PAIGEPGDLF (90 aa)) are head domain (RuvB-H). Positions 293, 312, and 317 each coordinate DNA.

This sequence belongs to the RuvB family. Homohexamer. Forms an RuvA(8)-RuvB(12)-Holliday junction (HJ) complex. HJ DNA is sandwiched between 2 RuvA tetramers; dsDNA enters through RuvA and exits via RuvB. An RuvB hexamer assembles on each DNA strand where it exits the tetramer. Each RuvB hexamer is contacted by two RuvA subunits (via domain III) on 2 adjacent RuvB subunits; this complex drives branch migration. In the full resolvosome a probable DNA-RuvA(4)-RuvB(12)-RuvC(2) complex forms which resolves the HJ.

The protein localises to the cytoplasm. The enzyme catalyses ATP + H2O = ADP + phosphate + H(+). In terms of biological role, the RuvA-RuvB-RuvC complex processes Holliday junction (HJ) DNA during genetic recombination and DNA repair, while the RuvA-RuvB complex plays an important role in the rescue of blocked DNA replication forks via replication fork reversal (RFR). RuvA specifically binds to HJ cruciform DNA, conferring on it an open structure. The RuvB hexamer acts as an ATP-dependent pump, pulling dsDNA into and through the RuvAB complex. RuvB forms 2 homohexamers on either side of HJ DNA bound by 1 or 2 RuvA tetramers; 4 subunits per hexamer contact DNA at a time. Coordinated motions by a converter formed by DNA-disengaged RuvB subunits stimulates ATP hydrolysis and nucleotide exchange. Immobilization of the converter enables RuvB to convert the ATP-contained energy into a lever motion, pulling 2 nucleotides of DNA out of the RuvA tetramer per ATP hydrolyzed, thus driving DNA branch migration. The RuvB motors rotate together with the DNA substrate, which together with the progressing nucleotide cycle form the mechanistic basis for DNA recombination by continuous HJ branch migration. Branch migration allows RuvC to scan DNA until it finds its consensus sequence, where it cleaves and resolves cruciform DNA. The protein is Holliday junction branch migration complex subunit RuvB of Xanthomonas campestris pv. campestris (strain ATCC 33913 / DSM 3586 / NCPPB 528 / LMG 568 / P 25).